Here is a 927-residue protein sequence, read N- to C-terminus: Echinoderm microtubule-associated protein-like 4 (927 aa).

The tract at residues 1–189 is microtubule-binding; that stretch reads MDGFAGSLDD…IPSDVENYDD (189 aa). Residues 14-63 are a coiled coil; it reads AASTSDVQDRLSALELRVQQQEDEITVLKAALADVLRRLAISEDQVATVR. Residues 85–132 are disordered; the sequence is NGGAGTRKPSHASSVAKKDTLSSAAKSVKRSSTLEKSHNSWDASEESR. Positions 116–132 are enriched in basic and acidic residues; it reads STLEKSHNSWDASEESR. 13 WD repeats span residues 199–237, 241–288, 296–336, 343–378, 385–424, 442–480, 485–521, 524–563, 567–604, 610–646, 653–692, 702–760, and 767–806; these read LKLE…LFNY, TQRH…VWDS, VIGL…VWDW, AEIK…FWTW, RKQG…IWSK, QISK…MWDH, EREI…LRGT, DGFQ…LWNS, SLEW…VLDA, VSIH…LYNV, YSRY…YWDI, RSEC…LFQY, and APSH…QWRL. Over residues 815–829 the composition is skewed to polar residues; it reads NDNIAESSSAVNSPV. Positions 815-927 are disordered; it reads NDNIAESSSA…NQDDDDAPLS (113 aa). Residues 914–927 show a composition bias toward acidic residues; sequence AQDENQDDDDAPLS.

It belongs to the WD repeat EMAP family. Homotrimer; self-association is mediated by the N-terminal coiled coil.

The protein resides in the cytoplasm. It localises to the cytoskeleton. The protein localises to the spindle. Its subcellular location is the microtubule organizing center. It is found in the midbody. Its function is as follows. Essential for the formation and stability of microtubules (MTs). Required for the organization of the mitotic spindle and for the proper attachment of kinetochores to MTs. Promotes the recruitment of NUDC to the mitotic spindle for mitotic progression. The chain is Echinoderm microtubule-associated protein-like 4 (eml4) from Xenopus laevis (African clawed frog).